A 146-amino-acid polypeptide reads, in one-letter code: Prefoldin subunit alpha 1 (146 aa).

The protein belongs to the prefoldin subunit alpha family. Heterohexamer of two alpha and four beta subunits.

The protein resides in the cytoplasm. Its function is as follows. Molecular chaperone capable of stabilizing a range of proteins. Seems to fulfill an ATP-independent, HSP70-like function in archaeal de novo protein folding. The protein is Prefoldin subunit alpha 1 of Thermococcus kodakarensis (strain ATCC BAA-918 / JCM 12380 / KOD1) (Pyrococcus kodakaraensis (strain KOD1)).